The primary structure comprises 1016 residues: Mediator of RNA polymerase II transcription subunit 5 (1016 aa).

The protein belongs to the Mediator complex subunit 5 family. In terms of assembly, component of the Mediator complex.

Its subcellular location is the nucleus. Its function is as follows. Component of the Mediator complex, a coactivator involved in the regulated transcription of nearly all RNA polymerase II-dependent genes. Mediator functions as a bridge to convey information from gene-specific regulatory proteins to the basal RNA polymerase II transcription machinery. Mediator is recruited to promoters by direct interactions with regulatory proteins and serves as a scaffold for the assembly of a functional preinitiation complex with RNA polymerase II and the general transcription factors. The sequence is that of Mediator of RNA polymerase II transcription subunit 5 (nut1) from Aspergillus terreus (strain NIH 2624 / FGSC A1156).